Here is a 149-residue protein sequence, read N- to C-terminus: Small ribosomal subunit protein bS16 (149 aa).

A disordered region spans residues 115–149 (KLKAAKSEADAKAKAEAEAAATEEAPAEEPAAEAE). Positions 119-131 (AKSEADAKAKAEA) are enriched in basic and acidic residues. A compositionally biased stretch (acidic residues) spans 139–149 (APAEEPAAEAE).

It belongs to the bacterial ribosomal protein bS16 family.

The chain is Small ribosomal subunit protein bS16 from Bifidobacterium adolescentis (strain ATCC 15703 / DSM 20083 / NCTC 11814 / E194a).